Reading from the N-terminus, the 713-residue chain is Catalase-peroxidase (713 aa).

Residues 77–200 constitute a cross-link (tryptophyl-tyrosyl-methioninium (Trp-Tyr) (with M-226)); that stretch reads WHSAGTYRTT…LGATVMGLIY (124 aa). The active-site Proton acceptor is histidine 78. Positions 200 to 226 form a cross-link, tryptophyl-tyrosyl-methioninium (Tyr-Met) (with W-77); the sequence is YVNPEGPDGEPDLEGSAANIRESFGRM. A heme b-binding site is contributed by histidine 241.

This sequence belongs to the peroxidase family. Peroxidase/catalase subfamily. As to quaternary structure, homodimer or homotetramer. Heme b serves as cofactor. Formation of the three residue Trp-Tyr-Met cross-link is important for the catalase, but not the peroxidase activity of the enzyme.

The enzyme catalyses H2O2 + AH2 = A + 2 H2O. The catalysed reaction is 2 H2O2 = O2 + 2 H2O. In terms of biological role, bifunctional enzyme with both catalase and broad-spectrum peroxidase activity. The sequence is that of Catalase-peroxidase from Natronomonas pharaonis (strain ATCC 35678 / DSM 2160 / CIP 103997 / JCM 8858 / NBRC 14720 / NCIMB 2260 / Gabara) (Halobacterium pharaonis).